An 86-amino-acid polypeptide reads, in one-letter code: Exodeoxyribonuclease 7 small subunit (86 aa).

Residues 1–26 form a disordered region; the sequence is MQDELFETEKAPQKNAKNAKNAPKKS.

It belongs to the XseB family. Heterooligomer composed of large and small subunits.

It is found in the cytoplasm. The enzyme catalyses Exonucleolytic cleavage in either 5'- to 3'- or 3'- to 5'-direction to yield nucleoside 5'-phosphates.. Its function is as follows. Bidirectionally degrades single-stranded DNA into large acid-insoluble oligonucleotides, which are then degraded further into small acid-soluble oligonucleotides. This is Exodeoxyribonuclease 7 small subunit from Helicobacter pylori (strain J99 / ATCC 700824) (Campylobacter pylori J99).